The sequence spans 487 residues: Glutamyl-tRNA(Gln) amidotransferase subunit A (487 aa).

Residues Lys80 and Ser155 each act as charge relay system in the active site. Catalysis depends on Ser179, which acts as the Acyl-ester intermediate.

Belongs to the amidase family. GatA subfamily. In terms of assembly, heterotrimer of A, B and C subunits.

The enzyme catalyses L-glutamyl-tRNA(Gln) + L-glutamine + ATP + H2O = L-glutaminyl-tRNA(Gln) + L-glutamate + ADP + phosphate + H(+). Functionally, allows the formation of correctly charged Gln-tRNA(Gln) through the transamidation of misacylated Glu-tRNA(Gln) in organisms which lack glutaminyl-tRNA synthetase. The reaction takes place in the presence of glutamine and ATP through an activated gamma-phospho-Glu-tRNA(Gln). This chain is Glutamyl-tRNA(Gln) amidotransferase subunit A, found in Leptospira interrogans serogroup Icterohaemorrhagiae serovar Lai (strain 56601).